Reading from the N-terminus, the 464-residue chain is Protein phosphatase 2C homolog 2 (464 aa).

A PPM-type phosphatase domain is found at 23 to 292 (AFGLCAMQGW…DNMSIVVVAL (270 aa)). Mn(2+) contacts are provided by aspartate 62, glycine 63, aspartate 234, and aspartate 283. Residues 174–355 (DGFVEMDRVN…KPQDKFTRDH (182 aa)) are interaction with IRE1. Disordered stretches follow at residues 361–398 (SVTA…TSGP) and 434–464 (QLLQ…SHLQ). A compositionally biased stretch (acidic residues) spans 366–384 (DNDDPMDIDDTDADTDAEN). 2 positions are modified to phosphothreonine: threonine 376 and threonine 380. Positions 386–396 (DPSSQSKSKTS) are enriched in polar residues. Positions 448–458 (PENDSNTDHKA) are enriched in basic and acidic residues.

Belongs to the PP2C family. In terms of assembly, interacts with IRE1 (when phosphorylated); the interaction is direct and serves to attenuate the endoplasmic reticulum unfolded protein response. Interacts (when phosphorylated) with RAD53 (via domain FHA 1); the interaction is direct and serves to regulate DNA damage checkpoint signaling. Interacts with the ATG17-ATG29-ATG31 and ATG1-ATG13 supercomplex; to regulate induction of autophagy. Mg(2+) is required as a cofactor. It depends on Mn(2+) as a cofactor.

Its subcellular location is the nucleus. It is found in the cytoplasm. The protein localises to the cytosol. The catalysed reaction is O-phospho-L-seryl-[protein] + H2O = L-seryl-[protein] + phosphate. It carries out the reaction O-phospho-L-threonyl-[protein] + H2O = L-threonyl-[protein] + phosphate. In terms of biological role, dephosphorylating regulator for many key proteins. Dephosphorylates the cell cycle master regulator CDC28/cyclin-dependent kinase 1; its activity appears redundant with phosphatase PTC3. Dephosphorylates HOG1 at 'Thr-171', to attenuate activation of the stress-activated p38MAPK cascade; its activity appears redundant with phosphatase PTC3. Positively regulates both nonselective macroautophagy as well as the selective cytoplasm-to-vacuole (cvt) autophagy pathway and the genotoxin-induced targeted autophagy (GTA) pathway, possibly by dephosphorylating ATG13 to enable the interaction between the ATG17-ATG29-ATG31 and ATG1-ATG13 complexes; its activity appears redundant with phosphatase PTC3. Dephosphorylates RAD53, to regulate DNA damage checkpoint signaling. Dephosphorylates IRE1, to negatively regulate the endoplasmic reticulum unfolded protein response. The sequence is that of Protein phosphatase 2C homolog 2 (PTC2) from Saccharomyces cerevisiae (strain ATCC 204508 / S288c) (Baker's yeast).